We begin with the raw amino-acid sequence, 73 residues long: MLKIASLKKKDMQTKESCILKRPGLSCPPNKTKEVNESKQIFFLTWKNKATMKVSFIVAPTVMQVQCLFFFIL.

A helical membrane pass occupies residues 54–72 (VSFIVAPTVMQVQCLFFFI).

The protein localises to the membrane. This is an uncharacterized protein from Saccharomyces cerevisiae (strain ATCC 204508 / S288c) (Baker's yeast).